We begin with the raw amino-acid sequence, 274 residues long: Probable lipoprotein peptidase YaeF (274 aa).

Positions 1 to 20 (MDKPKAYCRLFLPSFLLLSA) are cleaved as a signal peptide. A lipid anchor (N-palmitoyl cysteine) is attached at Cys21. Cys21 carries the S-diacylglycerol cysteine lipid modification. Cys207 functions as the Nucleophile in the catalytic mechanism. Catalysis depends on His257, which acts as the Proton acceptor.

The protein localises to the cell inner membrane. This chain is Probable lipoprotein peptidase YaeF (yaeF), found in Escherichia coli (strain K12).